A 450-amino-acid polypeptide reads, in one-letter code: MTTWNFVCLGLGSNLGNRHEYIKRAYESLKKAGIRNLKSSVILETKALLLEGSPKEWDLPYFNCVAIGETQLSPDELVKEIKMIENRLSRDSSLKWGPRSIDIDVLLYGDESYSCCSERCIIPHPRLLERPFLLSMMASLCPYRYFRLRGSPYDGKTFAELAAIYPLTEKDVLGSFAPTTQIMGIVNVTDDSISDTGLFLEAKRAAAHAERLFAEGASIIDLGAQATNPRVRDLGSVEQEWERLEPVLQILAESWKDAKQYPDVSIDTFRPEVIRRAIQVFPIRWINDVSGGSLEMAHLAKDLGLRLLINHSCSLPPRPDCVLSYEESPVTQMLRWGESQLETFAQIGLDTSWQVVFDPGIGFGKTPVQSMQLMEGVAKFKHILKCPVLIGHSRKSCLSLLGRFSSQDRDWETIGCSVALHNQGVDYLRVHQVEGNRRVLAAAAWSGMPV.

The tract at residues 1-166 (MTTWNFVCLG…TFAELAAIYP (166 aa)) is HPPK. Positions 180 to 441 (TQIMGIVNVT…QVEGNRRVLA (262 aa)) constitute a Pterin-binding domain. Residues 182–450 (IMGIVNVTDD…AAAAWSGMPV (269 aa)) form a DHPS region. N187 serves as a coordination point for Mg(2+). Residues T227, D267, N287, D358, K395, and 429–431 (RVH) each bind (7,8-dihydropterin-6-yl)methyl diphosphate.

The protein in the C-terminal section; belongs to the DHPS family. In the N-terminal section; belongs to the HPPK family. Mg(2+) serves as cofactor.

The catalysed reaction is 6-hydroxymethyl-7,8-dihydropterin + ATP = (7,8-dihydropterin-6-yl)methyl diphosphate + AMP + H(+). The enzyme catalyses (7,8-dihydropterin-6-yl)methyl diphosphate + 4-aminobenzoate = 7,8-dihydropteroate + diphosphate. The protein operates within cofactor biosynthesis; tetrahydrofolate biosynthesis; 2-amino-4-hydroxy-6-hydroxymethyl-7,8-dihydropteridine diphosphate from 7,8-dihydroneopterin triphosphate: step 4/4. It participates in cofactor biosynthesis; tetrahydrofolate biosynthesis; 7,8-dihydrofolate from 2-amino-4-hydroxy-6-hydroxymethyl-7,8-dihydropteridine diphosphate and 4-aminobenzoate: step 1/2. This is Folate synthesis bifunctional protein (folKP) from Chlamydia muridarum (strain MoPn / Nigg).